A 342-amino-acid polypeptide reads, in one-letter code: Cell cycle control protein 50C (342 aa).

Topologically, residues 1–33 (MEMMPQYDLSRLPENTALKQQTLPTQQLNLSAS) are cytoplasmic. The helical transmembrane segment at 34 to 54 (VVLSIFFITGGFCLSIGIILL) threads the bilayer. The Extracellular segment spans residues 55-306 (LSAKSTKKIE…STLTWIGGGG (252 aa)). N66, N80, N89, and N205 each carry an N-linked (GlcNAc...) asparagine glycan. A helical transmembrane segment spans residues 307–327 (LFLGLTYTVTGALTLLASFAI). The Cytoplasmic portion of the chain corresponds to 328–342 (LTIHLMLKRSKLNFL).

The protein belongs to the CDC50/LEM3 family. Specifically expressed in testis.

It localises to the membrane. This is Cell cycle control protein 50C (Tmem30c) from Mus musculus (Mouse).